Here is a 228-residue protein sequence, read N- to C-terminus: MTARRAPAVNRDVLEGMLVEGTAALDLTLTDTQRNQLLDYVALLGKWNAVYNLTAIRDPMQMLIQHILDSLSIVPHLRGRTSARVLDVGSGGGLPGIVLAIVEPGWQVTLNDIVQKKSAFQTQMRAELKLANLSVVTGRVESLQPGVEVPEKFDMIVSRAFADLSDFVKLARHLVAPGGSIWAMKGVHPDDEIARLPEGSRVTQTIRLAVPMLDAERHLFEVAVDDAN.

S-adenosyl-L-methionine-binding positions include Gly-89, Leu-94, 140–141 (VE), and Arg-159.

It belongs to the methyltransferase superfamily. RNA methyltransferase RsmG family.

The protein localises to the cytoplasm. The catalysed reaction is guanosine(527) in 16S rRNA + S-adenosyl-L-methionine = N(7)-methylguanosine(527) in 16S rRNA + S-adenosyl-L-homocysteine. In terms of biological role, specifically methylates the N7 position of guanine in position 527 of 16S rRNA. This chain is Ribosomal RNA small subunit methyltransferase G, found in Burkholderia cenocepacia (strain HI2424).